The sequence spans 348 residues: Ketol-acid reductoisomerase (NADP(+)) (348 aa).

Residues 1-179 (MDVHYDADPA…GGTHAGVIET (179 aa)) form the KARI N-terminal Rossmann domain. Residues 22–25 (YGSQ), arginine 45, serine 48, serine 50, and 80–83 (DQHQ) contribute to the NADP(+) site. Histidine 105 is a catalytic residue. Glycine 131 provides a ligand contact to NADP(+). One can recognise a KARI C-terminal knotted domain in the interval 180-325 (TFKDETETDL…QTLRGMMPWL (146 aa)). Residues aspartate 188, glutamate 192, glutamate 224, and glutamate 228 each coordinate Mg(2+). Position 249 (serine 249) interacts with substrate. Residues 323–348 (PWLNGDETSADEDAPDAADTAPASSS) form a disordered region. The segment covering 339-348 (AADTAPASSS) has biased composition (low complexity).

Belongs to the ketol-acid reductoisomerase family. The cofactor is Mg(2+).

It catalyses the reaction (2R)-2,3-dihydroxy-3-methylbutanoate + NADP(+) = (2S)-2-acetolactate + NADPH + H(+). The catalysed reaction is (2R,3R)-2,3-dihydroxy-3-methylpentanoate + NADP(+) = (S)-2-ethyl-2-hydroxy-3-oxobutanoate + NADPH + H(+). It functions in the pathway amino-acid biosynthesis; L-isoleucine biosynthesis; L-isoleucine from 2-oxobutanoate: step 2/4. Its pathway is amino-acid biosynthesis; L-valine biosynthesis; L-valine from pyruvate: step 2/4. Involved in the biosynthesis of branched-chain amino acids (BCAA). Catalyzes an alkyl-migration followed by a ketol-acid reduction of (S)-2-acetolactate (S2AL) to yield (R)-2,3-dihydroxy-isovalerate. In the isomerase reaction, S2AL is rearranged via a Mg-dependent methyl migration to produce 3-hydroxy-3-methyl-2-ketobutyrate (HMKB). In the reductase reaction, this 2-ketoacid undergoes a metal-dependent reduction by NADPH to yield (R)-2,3-dihydroxy-isovalerate. This Salinibacter ruber (strain DSM 13855 / M31) protein is Ketol-acid reductoisomerase (NADP(+)).